The primary structure comprises 366 residues: Envelope glycoprotein M (366 aa).

Residues Met-1–Gln-17 are Intravirion-facing. The chain crosses the membrane as a helical span at residues Leu-18–Val-38. Residues Glu-39 to Thr-83 lie on the Virion surface side of the membrane. The helical transmembrane segment at Trp-84–Leu-104 threads the bilayer. Topologically, residues Gln-105–Ser-113 are intravirion. The helical transmembrane segment at Met-114–Ile-134 threads the bilayer. At Ala-135–Met-153 the chain is on the virion surface side. Residues Leu-154–Val-174 form a helical membrane-spanning segment. The Intravirion portion of the chain corresponds to Ser-175–Asn-209. Residues Met-210–Ile-230 traverse the membrane as a helical segment. Over Gly-231 to Tyr-235 the chain is Virion surface. A helical membrane pass occupies residues Ile-236 to Trp-256. Topologically, residues Tyr-257 to Lys-269 are intravirion. The helical transmembrane segment at Leu-270–Leu-290 threads the bilayer. Over Arg-291 to Thr-304 the chain is Virion surface. The chain crosses the membrane as a helical span at residues Val-305 to Phe-325. Residues Arg-326–Leu-366 are Intravirion-facing.

This sequence belongs to the herpesviridae glycoprotein M family. Interacts (via N-terminus) with gN (via N-terminus). The gM-gN heterodimer forms the gCII complex.

Its subcellular location is the virion membrane. The protein localises to the host Golgi apparatus. The protein resides in the host trans-Golgi network. It localises to the host endosome membrane. It is found in the host nucleus inner membrane. Its function is as follows. Envelope glycoprotein important for virion assembly and egress. Plays a role in the correct incorporation of gH-gL into virion membrane. Directs the glycoprotein N (gN) to the host trans-Golgi network. This chain is Envelope glycoprotein M, found in Saimiri sciureus (Common squirrel monkey).